Here is a 461-residue protein sequence, read N- to C-terminus: DNA polymerase delta subunit 3 (461 aa).

3 disordered regions span residues 148–229 (VAQA…SAKG), 249–380 (VPGQ…KRVL), and 399–461 (YESE…CQKK). Over residues 155–172 (ARSSSQTPSDTSAVSTPP) the composition is skewed to polar residues. Over residues 205–214 (DANKEPKAKE) the composition is skewed to basic and acidic residues. The span at 215-228 (APSVSAASSKPSAK) shows a compositional bias: low complexity. Positions 279–304 (KPGRKTEPAKIQQKDKKSKMKRMDKS) are enriched in basic and acidic residues. Over residues 371–380 (GKKRKRKRVL) the composition is skewed to basic residues. Basic and acidic residues predominate over residues 427–436 (VKKEPKEERK). The PIP-box signature appears at 451–458 (QISIMGFC).

In terms of assembly, component of both the DNA polymerase delta and DNA polymerase zeta complexes. The tetrameric DNA polymerase delta complex (Pol-delta4), which consists of POLD1/p125, POLD2/p50, POLD3/p66/p68 and POLD4/p12, with POLD1 bearing DNA polymerase and 3' to 5' proofreading exonuclease activities.

It localises to the cytoplasm. Its subcellular location is the nucleus. Accessory component of both the DNA polymerase delta complex and the DNA polymerase zeta complex. As a component of the trimeric and tetrameric DNA polymerase delta complexes (Pol-delta3 and Pol-delta4, respectively), plays a role in high fidelity genome replication, including in lagging strand synthesis, and repair. Required for optimal Pol-delta activity. Stabilizes the Pol-delta complex and plays a major role in Pol-delta stimulation by PCNA. Pol-delta3 and Pol-delta4 are characterized by the absence or the presence of POLD4. They exhibit differences in catalytic activity. Most notably, Pol-delta3 shows higher proofreading activity than Pol-delta4. Although both Pol-delta3 and Pol-delta4 process Okazaki fragments in vitro, Pol-delta3 may also be better suited to fulfill this task, exhibiting near-absence of strand displacement activity compared to Pol-delta4 and stalling on encounter with the 5'-blocking oligonucleotides. Pol-delta3 idling process may avoid the formation of a gap, while maintaining a nick that can be readily ligated. Along with DNA polymerase kappa, DNA polymerase delta carries out approximately half of nucleotide excision repair (NER) synthesis following UV irradiation. In this context, POLD3, along with PCNA and RFC1-replication factor C complex, is required to recruit POLD1, the catalytic subunit of the polymerase delta complex, to DNA damage sites. Under conditions of DNA replication stress, required for the repair of broken replication forks through break-induced replication (BIR). Involved in the translesion synthesis (TLS) of templates carrying O6-methylguanine or abasic sites performed by Pol-delta4, independently of DNA polymerase zeta (REV3L) or eta (POLH). Facilitates abasic site bypass by DNA polymerase delta by promoting extension from the nucleotide inserted opposite the lesion. Also involved in TLS, as a component of the tetrameric DNA polymerase zeta complex. Along with POLD2, dramatically increases the efficiency and processivity of DNA synthesis of the DNA polymerase zeta complex compared to the minimal zeta complex, consisting of only REV3L and REV7. This Gallus gallus (Chicken) protein is DNA polymerase delta subunit 3 (POLD3).